The chain runs to 127 residues: DNA-directed RNA polymerases I, II, and III subunit RPABC2 (127 aa).

Over residues 1 to 34 the composition is skewed to acidic residues; sequence MSDNEDNFDGDDFDDVEEDEGLDDLENAEEEGQE. The tract at residues 1–53 is disordered; it reads MSDNEDNFDGDDFDDVEEDEGLDDLENAEEEGQENVEILPSGERPQANQKRIT. The residue at position 2 (serine 2) is an N-acetylserine. A Phosphoserine; by CK2 modification is found at serine 2.

It belongs to the archaeal Rpo6/eukaryotic RPB6 RNA polymerase subunit family. As to quaternary structure, component of the RNA polymerase I (Pol I), RNA polymerase II (Pol II) and RNA polymerase III (Pol III) complexes consisting of at least 13, 12 and 17 subunits, respectively. Pol I complex consists of a ten-subunit catalytic core composed of POLR1A/RPA1, POLR1B/RPA2, POLR1C/RPAC1, POLR1D/RPAC2, POLR1H/RPA12, POLR2E/RPABC1, POLR2F/RPABC2, POLR2H/RPABC3, POLR2K/RPABC4 and POLR2L/RPABC5; a mobile stalk subunit POLR1F/RPA43 protruding from the core and additional subunits homologous to general transcription factors POLR1E/RPA49 and POLR1G/RPA34. Part of Pol I pre-initiation complex (PIC), in which Pol I core assembles with RRN3 and promoter-bound UTBF and SL1/TIF-IB complex. Pol II complex contains a ten-subunit catalytic core composed of POLR2A/RPB1, POLR2B/RPB2, POLR2C/RPB3, POLR2I/RPB9, POLR2J/RPB11, POLR2E/RPABC1, POLR2F/RPABC2, POLR2H/RPABC3, POLR2K/RPABC4 and POLR2L/RPABC5 and a mobile stalk composed of two subunits POLR2D/RPB4 and POLR2G/RPB7. Part of Pol II(G) complex, in which Pol II core associates with an additional subunit POLR2M; unlike conventional Pol II, Pol II(G) functions as a transcriptional repressor. Part of TBP-based Pol II pre-initiation complex (PIC), in which Pol II core assembles with general transcription factors and other specific initiation factors including GTF2E1, GTF2E2, GTF2F1, GTF2F2, TCEA1, ERCC2, ERCC3, GTF2H2, GTF2H3, GTF2H4, GTF2H5, GTF2A1, GTF2A2, GTF2B and TBP; this large multi-subunit PIC complex mediates DNA unwinding and targets Pol II core to the transcription start site where the first phosphodiester bond forms. Pol III complex consists of a ten-subunit catalytic core composed of POLR3A/RPC1, POLR3B/RPC2, POLR1C/RPAC1, POLR1D/RPAC2, POLR3K/RPC10, POLR2E/RPABC1, POLR2F/RPABC2, POLR2H/RPABC3, POLR2K/RPABC4 and POLR2L/RPABC5; a mobile stalk composed of two subunits POLR3H/RPC8 and CRCP/RPC9, protruding from the core and functioning primarily in transcription initiation; and additional subunits homologous to general transcription factors of the RNA polymerase II machinery, POLR3C/RPC3-POLR3F/RPC6-POLR3G/RPC7 heterotrimer required for transcription initiation and POLR3D/RPC4-POLR3E/RPC5 heterodimer involved in both transcription initiation and termination.

It is found in the nucleus. The protein resides in the nucleolus. DNA-dependent RNA polymerase catalyzes the transcription of DNA into RNA using the four ribonucleoside triphosphates as substrates. Common component of RNA polymerases I, II, and III which synthesize ribosomal RNA precursors, mRNA precursors and many functional non-coding RNAs, and small RNAs, such as 5S rRNA and tRNAs, respectively. Pol II is the central component of the basal RNA polymerase II transcription machinery. Pols are composed of mobile elements that move relative to each other. In Pol II, POLR2F/RPABC2 is part of the clamp element and together with parts of POLR2A/RPB1 and POLR2B/RPB2 forms a pocket to which the POLR2D/RPB4-POLR2G/RPB7 subcomplex binds. The sequence is that of DNA-directed RNA polymerases I, II, and III subunit RPABC2 from Homo sapiens (Human).